The sequence spans 482 residues: C3a anaphylatoxin chemotactic receptor (482 aa).

The Extracellular portion of the chain corresponds to 1–23; the sequence is MASFSAETNSTDLLSQPWNEPPV. Asn9 carries an N-linked (GlcNAc...) asparagine glycan. The helical transmembrane segment at 24–46 threads the bilayer; sequence ILSMVILSLTFLLGLPGNGLVLW. Topologically, residues 47–57 are cytoplasmic; it reads VAGLKMQRTVN. The chain crosses the membrane as a helical span at residues 58 to 80; sequence TVWFLHLTLADLLCCLSLPFSLA. At 81–96 the chain is on the extracellular side; the sequence is HLALQGQWPYGRFLCE. Cys95 and Cys172 are oxidised to a cystine. Residues 97 to 118 form a helical membrane-spanning segment; that stretch reads LIPSIIVLNMFASVFLLTAISL. Topologically, residues 119-139 are cytoplasmic; that stretch reads DRCLVVFKPIWCQNHRNVGTA. A helical transmembrane segment spans residues 140 to 160; that stretch reads CSICGCIWVVAFVMCIPVFVY. At 161–340 the chain is on the extracellular side; that stretch reads REIFTADNHN…TPLVAITITR (180 aa). Tyr174 and Tyr184 each carry sulfotyrosine. Residue Asn194 is glycosylated (N-linked (GlcNAc...) asparagine). At Tyr318 the chain carries Sulfotyrosine. The chain crosses the membrane as a helical span at residues 341 to 360; sequence LVVGFLLPSVIMIACYSFIV. Residues 361–377 are Cytoplasmic-facing; sequence FRMQRGRFAKSQSKTFR. A helical transmembrane segment spans residues 378 to 400; sequence VAVVVVAVFLVCWTPYHIFGVLS. Topologically, residues 401 to 417 are extracellular; that stretch reads LLIDPESPLGKTLMSWD. Residues 418-438 traverse the membrane as a helical segment; sequence HVSIALASANSCFNPFLYALL. At 439–482 the chain is on the cytoplasmic side; sequence GKDFRKKARQSIQGILEAAFSEELTRSTHCNSNNVFSERNSTTV. A Phosphoserine modification is found at Ser459. Thr463 carries the phosphothreonine modification.

The protein belongs to the G-protein coupled receptor 1 family. In terms of assembly, interacts with VGF-derived peptide TLQP-21. In terms of processing, among the sulfation sites Tyr-174 is essential for binding of C3a anaphylatoxin.

It is found in the cell membrane. In terms of biological role, receptor for the chemotactic and inflammatory peptide anaphylatoxin C3a. This receptor stimulates chemotaxis, granule enzyme release and superoxide anion production. The polypeptide is C3a anaphylatoxin chemotactic receptor (C3AR1) (Pongo abelii (Sumatran orangutan)).